A 27-amino-acid polypeptide reads, in one-letter code: Fructokinase (27 aa).

Belongs to the ROK (NagC/XylR) family. Homodimer. It depends on Mg(2+) as a cofactor.

The enzyme catalyses D-fructose + ATP = D-fructose 6-phosphate + ADP + H(+). With respect to regulation, inhibition by zinc ions. This chain is Fructokinase, found in Fusobacterium mortiferum.